The primary structure comprises 197 residues: Protein GrpE (197 aa).

The segment at 1–40 (MSSKEQKTPEGQAPEEIIMDQHEEIEAVEPEASAEQVDPR) is disordered.

It belongs to the GrpE family. Homodimer.

Its subcellular location is the cytoplasm. In terms of biological role, participates actively in the response to hyperosmotic and heat shock by preventing the aggregation of stress-denatured proteins, in association with DnaK and GrpE. It is the nucleotide exchange factor for DnaK and may function as a thermosensor. Unfolded proteins bind initially to DnaJ; upon interaction with the DnaJ-bound protein, DnaK hydrolyzes its bound ATP, resulting in the formation of a stable complex. GrpE releases ADP from DnaK; ATP binding to DnaK triggers the release of the substrate protein, thus completing the reaction cycle. Several rounds of ATP-dependent interactions between DnaJ, DnaK and GrpE are required for fully efficient folding. The chain is Protein GrpE from Escherichia coli (strain K12 / DH10B).